Here is a 271-residue protein sequence, read N- to C-terminus: Dermonecrotic toxin LhSicTox-alphaIA2aiv (271 aa).

Residue His3 is part of the active site. Mg(2+)-binding residues include Glu23 and Asp25. His39 (nucleophile) is an active-site residue. Intrachain disulfides connect Cys43–Cys49 and Cys45–Cys188. Position 83 (Asp83) interacts with Mg(2+).

It belongs to the arthropod phospholipase D family. Class II subfamily. Requires Mg(2+) as cofactor. As to expression, expressed by the venom gland.

It is found in the secreted. It catalyses the reaction an N-(acyl)-sphingosylphosphocholine = an N-(acyl)-sphingosyl-1,3-cyclic phosphate + choline. The enzyme catalyses an N-(acyl)-sphingosylphosphoethanolamine = an N-(acyl)-sphingosyl-1,3-cyclic phosphate + ethanolamine. The catalysed reaction is a 1-acyl-sn-glycero-3-phosphocholine = a 1-acyl-sn-glycero-2,3-cyclic phosphate + choline. It carries out the reaction a 1-acyl-sn-glycero-3-phosphoethanolamine = a 1-acyl-sn-glycero-2,3-cyclic phosphate + ethanolamine. Functionally, dermonecrotic toxins cleave the phosphodiester linkage between the phosphate and headgroup of certain phospholipids (sphingolipid and lysolipid substrates), forming an alcohol (often choline) and a cyclic phosphate. This toxin acts on sphingomyelin (SM). It may also act on ceramide phosphoethanolamine (CPE), lysophosphatidylcholine (LPC) and lysophosphatidylethanolamine (LPE), but not on lysophosphatidylserine (LPS), and lysophosphatidylglycerol (LPG). It acts by transphosphatidylation, releasing exclusively cyclic phosphate products as second products. Induces dermonecrosis, hemolysis, increased vascular permeability, edema, inflammatory response, and platelet aggregation. This Loxosceles hirsuta (Recluse spider) protein is Dermonecrotic toxin LhSicTox-alphaIA2aiv.